The chain runs to 343 residues: Probable dual-specificity RNA methyltransferase RlmN (343 aa).

The active-site Proton acceptor is Glu91. The Radical SAM core domain occupies 97–326 (HPGRITACIS…AEIRQEKGSD (230 aa)). A disulfide bridge links Cys104 with Cys331. [4Fe-4S] cluster contacts are provided by Cys111, Cys115, and Cys118. Residues 158-159 (GE), Ser190, 213-215 (SLH), and Asn289 contribute to the S-adenosyl-L-methionine site. Cys331 (S-methylcysteine intermediate) is an active-site residue.

It belongs to the radical SAM superfamily. RlmN family. The cofactor is [4Fe-4S] cluster.

Its subcellular location is the cytoplasm. It catalyses the reaction adenosine(2503) in 23S rRNA + 2 reduced [2Fe-2S]-[ferredoxin] + 2 S-adenosyl-L-methionine = 2-methyladenosine(2503) in 23S rRNA + 5'-deoxyadenosine + L-methionine + 2 oxidized [2Fe-2S]-[ferredoxin] + S-adenosyl-L-homocysteine. The catalysed reaction is adenosine(37) in tRNA + 2 reduced [2Fe-2S]-[ferredoxin] + 2 S-adenosyl-L-methionine = 2-methyladenosine(37) in tRNA + 5'-deoxyadenosine + L-methionine + 2 oxidized [2Fe-2S]-[ferredoxin] + S-adenosyl-L-homocysteine. In terms of biological role, specifically methylates position 2 of adenine 2503 in 23S rRNA and position 2 of adenine 37 in tRNAs. The sequence is that of Probable dual-specificity RNA methyltransferase RlmN from Thermotoga neapolitana (strain ATCC 49049 / DSM 4359 / NBRC 107923 / NS-E).